We begin with the raw amino-acid sequence, 447 residues long: Cellulosome-anchoring protein (447 aa).

The signal sequence occupies residues 1 to 29; sequence MKRIKRILAVLTIFALLATINAFTFVSLA. Residues 30–180 enclose the Cohesin domain; that stretch reads QTNTIEIIIG…EIIEASAPEA (151 aa). The interval 30–180 is receptor binding site for duplicated segment of CipA; that stretch reads QTNTIEIIIG…EIIEASAPEA (151 aa). The disordered stretch occupies residues 177 to 247; sequence APEATPTPGS…EHAPFLKGYP (71 aa). Positions 188 to 200 are enriched in gly residues; the sequence is AGSGAGGGTGSSG. Residues 201 to 223 are compositionally biased toward low complexity; sequence SGQPSATPTPTATEKPSTTPKTT. 3 SLH domains span residues 216 to 280, 281 to 344, and 345 to 408; these read PSTT…AGKN, SSIT…EQGT, and DVKT…GAVL. Positions 409–429 constitute an SLH 4; truncated domain; the sequence is EFTDVPVNYWAYKDIAEGVIY.

Its subcellular location is the secreted. It localises to the cell wall. The protein localises to the S-layer. In terms of biological role, anchors the cellulosome to the cell surface by binding the duplicated segment that is present at the C-terminal end of CipA. The protein is Cellulosome-anchoring protein (ancA) of Acetivibrio thermocellus (strain ATCC 27405 / DSM 1237 / JCM 9322 / NBRC 103400 / NCIMB 10682 / NRRL B-4536 / VPI 7372) (Clostridium thermocellum).